A 584-amino-acid polypeptide reads, in one-letter code: Arginine--tRNA ligase (584 aa).

A 'HIGH' region motif is present at residues 127–137 (PNTNKPLHVGH).

It belongs to the class-I aminoacyl-tRNA synthetase family. In terms of assembly, monomer.

The protein resides in the cytoplasm. The catalysed reaction is tRNA(Arg) + L-arginine + ATP = L-arginyl-tRNA(Arg) + AMP + diphosphate. The polypeptide is Arginine--tRNA ligase (Borrelia turicatae (strain 91E135)).